The sequence spans 240 residues: Sugar fermentation stimulation protein homolog (240 aa).

Belongs to the SfsA family.

In Saccharolobus islandicus (strain L.S.2.15 / Lassen #1) (Sulfolobus islandicus), this protein is Sugar fermentation stimulation protein homolog.